We begin with the raw amino-acid sequence, 190 residues long: UPF0200 protein TGAM_0868 (190 aa).

7-14 is an ATP binding site; it reads GMPGSGKS.

The protein belongs to the UPF0200 family.

This is UPF0200 protein TGAM_0868 from Thermococcus gammatolerans (strain DSM 15229 / JCM 11827 / EJ3).